Consider the following 72-residue polypeptide: Translation initiation factor IF-1 (72 aa).

One can recognise an S1-like domain in the interval 1–72; it reads MSKDDVIEMQ…TRGRITWRAK (72 aa).

The protein belongs to the IF-1 family. In terms of assembly, component of the 30S ribosomal translation pre-initiation complex which assembles on the 30S ribosome in the order IF-2 and IF-3, IF-1 and N-formylmethionyl-tRNA(fMet); mRNA recruitment can occur at any time during PIC assembly.

Its subcellular location is the cytoplasm. One of the essential components for the initiation of protein synthesis. Stabilizes the binding of IF-2 and IF-3 on the 30S subunit to which N-formylmethionyl-tRNA(fMet) subsequently binds. Helps modulate mRNA selection, yielding the 30S pre-initiation complex (PIC). Upon addition of the 50S ribosomal subunit IF-1, IF-2 and IF-3 are released leaving the mature 70S translation initiation complex. The chain is Translation initiation factor IF-1 from Clostridium botulinum (strain ATCC 19397 / Type A).